Reading from the N-terminus, the 1047-residue chain is Cation efflux system protein CusA (1047 aa).

Transmembrane regions (helical) follow at residues 14-34 (FLVL…IINT), 338-358 (LSGK…LFLW), 363-383 (ALVA…VMHF), 391-411 (MSLG…IVMI), 446-466 (VGPA…PIFT), 485-505 (AMAG…GYWI), 532-552 (VLHW…TVLW), 871-891 (KLKL…YLAF), 898-918 (LLII…LWWM), 928-948 (TGFI…LMYL), 985-1005 (AMTV…TGAG), and 1012-1032 (IAAP…FIIP).

The protein belongs to the resistance-nodulation-cell division (RND) (TC 2.A.6) family. In terms of assembly, the cus efflux system is composed of CusA, CusB, CusC and CusF.

The protein localises to the cell inner membrane. Part of a cation efflux system that mediates resistance to copper and silver. This Escherichia coli (strain K12) protein is Cation efflux system protein CusA (cusA).